An 880-amino-acid chain; its full sequence is MEISSSPWNDGGYSPYERNRVAVSPFSSALEGEERIETSRSLGDHCFEPLPYVTNYLSIFALFGKEIFGDKGNVSSRNEYLLKKYYSLKKPFVLRHNGHALKNPDMPLQRNDILQTNFMVDKFLNRTVRSVNFNNFKIISDMQSKSGRGTKSGTNQNQSADAIQNICLPSIPSALPYFQYYRKLLTVNTKEWDILKLHSLWVPKLRKDFKDFSLYGDKNSLKPIDSHYDEDNTMKKNLFFERSPSRQTLDGKGCASKGYDISSGNMIIPSLFSEDKLPALTYHCSVELNGNIYIFGGLMPCYSYEEDAPMLNDFFVDGIKNLPPPLLPQVINNPSMVNNPHLYVASIPSCRFSKPKMGGYIPPPLLCVQGSKLTDRHIFFYGGFEIRTETRGDENGKYHLKKRLYVNNTGYILDIMSFKFTKIDIIVQPSKYNAYPTMSSRFGHLQISIDNPNRRASVHSSSMNEIHKMGSASMKQGSSITSGRLEKAAVLSSLPHNTVHTVIIFGGYRQTGDDRYEAMNDLWKIEIPVIRRGKKGYCKFSETANAILLTPSEKDKSDWPEERAFSAFSVHGTSLMDRSSLDMRLLNNLKNHFVLKPSYISQDRVVSPKPVFPMMVHGTHQDLFNSGSAAQESPKAGASASSASAASFDPDMDDNLENYIVNPGRKSSSIPMTAIGRQRLILSQEKPVGKTVVLHGGSNGLNVLDDMWLMDLECETWTPIETFAKADSSEDGDEKLDSVNVGLVGHRMESIGRICVCIGGMVQEDVDQFYSENDDEPPRKRKVDTLPLGGNFLNTIDLSTQCWEEHKITLSKKEDDEDRQDSENEDTNSNIVVGVGGTSLQCDKSIILIGGLISRRSNVKEIYLHGTITKSIFPSVNPSA.

Phosphoserine is present on serine 24. Kelch repeat units follow at residues 291 to 339 (NIYI…MVNN), 377 to 425 (HIFF…KIDI), and 501 to 552 (TVII…LTPS). Positions 624-649 (FNSGSAAQESPKAGASASSASAASFD) are disordered. Over residues 638–647 (ASASSASAAS) the composition is skewed to low complexity. A Kelch 4 repeat occupies 691 to 738 (TVVLHGGSNGLNVLDDMWLMDLECETWTPIETFAKADSSEDGDEKLDS).

G proteins are composed of 3 units, alpha, beta and gamma. GPB1 interacts with the alpha subunit GPA2.

The protein localises to the cytoplasm. The protein resides in the mitochondrion. Beta subunit of a guanine nucleotide-binding protein (G protein). G proteins are involved as modulators or transducers in various transmembrane signaling systems. The beta and gamma chains are required for the GTPase activity, for replacement of GDP by GTP, and for G protein-effector interaction. Involved in the determination of the cAMP level according to nutritional conditions, most probably as a regulator of cAMP phosphodiesterase. Required for the control of pseudohyphal and haploid invasive growth. The chain is Guanine nucleotide-binding protein subunit beta 2 (GPB2) from Saccharomyces cerevisiae (strain ATCC 204508 / S288c) (Baker's yeast).